The chain runs to 200 residues: UPF0329 protein ECU06_1670 (200 aa).

Belongs to the UPF0329 family.

This Encephalitozoon cuniculi (strain GB-M1) (Microsporidian parasite) protein is UPF0329 protein ECU06_1670.